Consider the following 121-residue polypeptide: Large ribosomal subunit protein uL18 (121 aa).

It belongs to the universal ribosomal protein uL18 family. As to quaternary structure, part of the 50S ribosomal subunit; part of the 5S rRNA/L5/L18/L25 subcomplex. Contacts the 5S and 23S rRNAs.

In terms of biological role, this is one of the proteins that bind and probably mediate the attachment of the 5S RNA into the large ribosomal subunit, where it forms part of the central protuberance. The chain is Large ribosomal subunit protein uL18 from Herpetosiphon aurantiacus (strain ATCC 23779 / DSM 785 / 114-95).